Reading from the N-terminus, the 443-residue chain is 3-phosphoshikimate 1-carboxyvinyltransferase (443 aa).

A disordered region spans residues 1-22 (MSHASRPTPLEARGSTPLTGRV). 3-phosphoshikimate-binding residues include Lys-28, Ser-29, and Arg-33. Lys-28 is a phosphoenolpyruvate binding site. Residues Gly-101 and Arg-129 each contribute to the phosphoenolpyruvate site. Ser-174, Gln-176, Asp-326, and Lys-353 together coordinate 3-phosphoshikimate. Gln-176 contributes to the phosphoenolpyruvate binding site. The active-site Proton acceptor is the Asp-326. Positions 357 and 400 each coordinate phosphoenolpyruvate.

This sequence belongs to the EPSP synthase family. In terms of assembly, monomer.

It localises to the cytoplasm. It catalyses the reaction 3-phosphoshikimate + phosphoenolpyruvate = 5-O-(1-carboxyvinyl)-3-phosphoshikimate + phosphate. It functions in the pathway metabolic intermediate biosynthesis; chorismate biosynthesis; chorismate from D-erythrose 4-phosphate and phosphoenolpyruvate: step 6/7. Catalyzes the transfer of the enolpyruvyl moiety of phosphoenolpyruvate (PEP) to the 5-hydroxyl of shikimate-3-phosphate (S3P) to produce enolpyruvyl shikimate-3-phosphate and inorganic phosphate. This chain is 3-phosphoshikimate 1-carboxyvinyltransferase, found in Afipia carboxidovorans (strain ATCC 49405 / DSM 1227 / KCTC 32145 / OM5) (Oligotropha carboxidovorans).